A 230-amino-acid polypeptide reads, in one-letter code: GGGGGNVSGSYREAGGNMQPGAYGSYNYTGMDLSISRTAAPTYGGDNSFPGQESSRFRANQNCPLSTPDPLPCAKSQKSELSPADPATSSAHFTETEETSASSETDESTPRSGAPPRALQDNCSPGAAGTDGQSPQIFPWMRKLHINHDMAGPDGKRARTAYTRYQTLELEKEFHFNRYLTRRRRIEIAHTLCLSERQIKIWFQNRRMKWKKDNKLKSMSLATGSSAFQP.

A disordered region spans residues 1 to 135 (GGGGGNVSGS…GAAGTDGQSP (135 aa)). Over residues 49–65 (FPGQESSRFRANQNCPL) the composition is skewed to polar residues. The segment covering 87 to 103 (ATSSAHFTETEETSASS) has biased composition (low complexity). The Antp-type hexapeptide motif lies at 137–142 (IFPWMR). The segment at residues 155-214 (GKRARTAYTRYQTLELEKEFHFNRYLTRRRRIEIAHTLCLSERQIKIWFQNRRMKWKKDN) is a DNA-binding region (homeobox).

Belongs to the Antp homeobox family.

It localises to the nucleus. Sequence-specific transcription factor which is part of a developmental regulatory system that provides cells with specific positional identities on the anterior-posterior axis. This is Homeobox protein Hox-B5 (hoxb5) from Xenopus laevis (African clawed frog).